Reading from the N-terminus, the 331-residue chain is tRNA N6-adenosine threonylcarbamoyltransferase (331 aa).

Residues His-107 and His-111 each coordinate Fe cation. Substrate is bound by residues 129 to 133 (LVSGG), Asp-162, Gly-175, and Asn-269. Residue Asp-297 participates in Fe cation binding.

This sequence belongs to the KAE1 / TsaD family. Fe(2+) is required as a cofactor.

Its subcellular location is the cytoplasm. It catalyses the reaction L-threonylcarbamoyladenylate + adenosine(37) in tRNA = N(6)-L-threonylcarbamoyladenosine(37) in tRNA + AMP + H(+). Required for the formation of a threonylcarbamoyl group on adenosine at position 37 (t(6)A37) in tRNAs that read codons beginning with adenine. Is involved in the transfer of the threonylcarbamoyl moiety of threonylcarbamoyl-AMP (TC-AMP) to the N6 group of A37, together with TsaE and TsaB. TsaD likely plays a direct catalytic role in this reaction. The polypeptide is tRNA N6-adenosine threonylcarbamoyltransferase (Wolinella succinogenes (strain ATCC 29543 / DSM 1740 / CCUG 13145 / JCM 31913 / LMG 7466 / NCTC 11488 / FDC 602W) (Vibrio succinogenes)).